A 478-amino-acid polypeptide reads, in one-letter code: Transcript termination protein A18 (478 aa).

Residues 98-254 (KVELKRPMYV…NDVINVSNSS (157 aa)) form the Helicase ATP-binding domain. 111-118 (LACGFGKT) contributes to the ATP binding site. Residues 204–207 (DESH) carry the DESH box motif. One can recognise a Helicase C-terminal domain in the interval 307 to 454 (ILDTIIYDFE…IITLAIEKLG (148 aa)).

It belongs to the helicase family. Poxviruses subfamily. In terms of assembly, interacts with G2. Might be part of a transcription complex composed at least of G2, A18, and H5.

It localises to the virion. Functionally, DNA helicase which seems to act as a postreplicative transcription termination factor. Involved in ATP-dependent release of nascent RNA. Forms a stable complex with single-stranded DNA, and to a lesser extent RNA. The sequence is that of Transcript termination protein A18 from Erythrocebus patas (Red guenon).